Consider the following 319-residue polypeptide: Aspartate carbamoyltransferase catalytic subunit (319 aa).

The carbamoyl phosphate site is built by arginine 65 and threonine 66. Lysine 93 is a binding site for L-aspartate. Carbamoyl phosphate-binding residues include arginine 115, histidine 143, and glutamine 146. L-aspartate contacts are provided by arginine 176 and arginine 230. Carbamoyl phosphate contacts are provided by glycine 271 and proline 272.

Belongs to the aspartate/ornithine carbamoyltransferase superfamily. ATCase family. As to quaternary structure, heterododecamer (2C3:3R2) of six catalytic PyrB chains organized as two trimers (C3), and six regulatory PyrI chains organized as three dimers (R2).

The catalysed reaction is carbamoyl phosphate + L-aspartate = N-carbamoyl-L-aspartate + phosphate + H(+). It functions in the pathway pyrimidine metabolism; UMP biosynthesis via de novo pathway; (S)-dihydroorotate from bicarbonate: step 2/3. Functionally, catalyzes the condensation of carbamoyl phosphate and aspartate to form carbamoyl aspartate and inorganic phosphate, the committed step in the de novo pyrimidine nucleotide biosynthesis pathway. This chain is Aspartate carbamoyltransferase catalytic subunit, found in Chelativorans sp. (strain BNC1).